Here is a 411-residue protein sequence, read N- to C-terminus: Adenylosuccinate synthetase (411 aa).

Residues 11 to 17 (GDEGKGK) and 39 to 41 (GHT) contribute to the GTP site. Aspartate 12 (proton acceptor) is an active-site residue. 2 residues coordinate Mg(2+): aspartate 12 and glycine 39. Residues 12-15 (DEGK), 37-40 (NAGH), threonine 121, arginine 135, glutamine 215, threonine 230, and arginine 294 contribute to the IMP site. Histidine 40 serves as the catalytic Proton donor. 290-296 (TTTKRPR) contacts substrate. GTP-binding positions include arginine 296, 322-324 (KLD), and 400-402 (STS).

Belongs to the adenylosuccinate synthetase family. In terms of assembly, homodimer. It depends on Mg(2+) as a cofactor.

Its subcellular location is the cytoplasm. It carries out the reaction IMP + L-aspartate + GTP = N(6)-(1,2-dicarboxyethyl)-AMP + GDP + phosphate + 2 H(+). The protein operates within purine metabolism; AMP biosynthesis via de novo pathway; AMP from IMP: step 1/2. Its function is as follows. Plays an important role in the de novo pathway of purine nucleotide biosynthesis. Catalyzes the first committed step in the biosynthesis of AMP from IMP. The polypeptide is Adenylosuccinate synthetase (Helicobacter pylori (strain J99 / ATCC 700824) (Campylobacter pylori J99)).